We begin with the raw amino-acid sequence, 140 residues long: ATP synthase epsilon chain (140 aa).

It belongs to the ATPase epsilon chain family. F-type ATPases have 2 components, CF(1) - the catalytic core - and CF(0) - the membrane proton channel. CF(1) has five subunits: alpha(3), beta(3), gamma(1), delta(1), epsilon(1). CF(0) has three main subunits: a, b and c.

Its subcellular location is the cell inner membrane. Its function is as follows. Produces ATP from ADP in the presence of a proton gradient across the membrane. The protein is ATP synthase epsilon chain of Bordetella bronchiseptica (strain ATCC BAA-588 / NCTC 13252 / RB50) (Alcaligenes bronchisepticus).